The chain runs to 1906 residues: Zinc metalloprotease ZmpB (1906 aa).

An N-terminal signal peptide occupies residues 1–33 (MFKKDRFSIRKIKGVVGSVFLGSLLMAPSVVDA). Positions 34-76 (ATYHYVNKEIISQEAKDLIQTGKPDRNEVVYGLVYQKDQLPQT) are excised as a propeptide. An LPXTG sorting signal motif is present at residues 73–77 (LPQTG). Pentaglycyl murein peptidoglycan amidated threonine is present on Thr-76. The next 2 membrane-spanning stretches (helical) occupy residues 77-98 (GTEA…LLIY) and 105-127 (SVFL…DPVA). Topologically, residues 128-1906 (TLALASREGV…TNSFKTSIFK (1779 aa)) are extracellular. Residues 178 to 436 (VETPQSITNQ…KASSVSPTDY (259 aa)) are disordered. Polar residues predominate over residues 181–196 (PQSITNQEQARTENQV). 5 stretches are compositionally biased toward basic and acidic residues: residues 201-239 (EAPK…KEDS), 252-262 (VESKPEEKVAV), 271-335 (KPAE…KEET), 352-375 (KQTE…REDE), and 383-408 (EPEK…DKIK). Tandem repeats lie at residues 277-291 (KVEQ…REDE), 293-315 (APVE…ETPK), 361-375 (KVEQ…REDE), and 380-402 (APVE…ETPK). The segment at 277-375 (KVEQAGEPVA…GEPVAPREDE (99 aa)) is 2 X 15 AA repeats of K-V-E-Q-A-G-E-P-V-A-P-R-E-D-E. Residues 293–375 (APVEPEKQPE…GEPVAPREDE (83 aa)) are 2 X 23 AA approximate repeats. The segment covering 421–436 (LNNQIDKASSVSPTDY) has biased composition (polar residues). Zn(2+) is bound at residue His-1562. Glu-1563 is an active-site residue. Residues His-1566 and Glu-1586 each coordinate Zn(2+).

It belongs to the peptidase M26 family. Zn(2+) is required as a cofactor. In terms of processing, the Gram-positive cell-wall anchor motif LPXTG is located in the N-terminal part, in contrast to such motifs in other known streptococcal and staphylococcal proteins. The protease could be cleaved by the sortase and anchored in the membrane via the two potential N-terminal transmembrane domains, whereas the propeptide located prior to the LPXTG motif would remain attached to the cell wall peptidoglycan by an amide bond.

The protein localises to the secreted. Its subcellular location is the cell wall. It is found in the membrane. Is a virulence factor capable of inducing inflammation in the lower respiratory tract, by increasing tumor necrosis factor alpha (TNF-alpha) concentration in the lungs. Also appears to have other functions important in virulence in models of pneumonia and septicemia. The sequence is that of Zinc metalloprotease ZmpB (zmpB) from Streptococcus pneumoniae serotype 4 (strain ATCC BAA-334 / TIGR4).